A 4451-amino-acid polypeptide reads, in one-letter code: Gramicidin S synthase 2 (4451 aa).

The tract at residues 467–1044 is domain 1 (proline-activating); it reads DKTIHQLFTE…IQEISNYING (578 aa). Carrier domains lie at 971–1046, 2006–2081, 3052–3127, and 4090–4165; these read VPTN…NGAK, APSS…ADGQ, RPRT…EETD, and APRN…THQE. Serine 1006, serine 2041, serine 3087, and serine 4125 each carry O-(pantetheine 4'-phosphoryl)serine. Positions 1521–2080 are domain 2 (valine-activating); it reads DHVAVGWKDQ…SALAQYIADG (560 aa). A domain 3 (ornithine-activating) region spans residues 2538-3135; it reads YATNKIFHEL…TDTEQYMAIQ (598 aa). A domain 4 (leucine-activating) region spans residues 3591–4173; that stretch reads IQELFEEQVK…QESENNVHQP (583 aa).

Belongs to the ATP-dependent AMP-binding enzyme family. In terms of assembly, large multienzyme complex of GrsA and GrsB. Requires pantetheine 4'-phosphate as cofactor.

It participates in antibiotic biosynthesis; gramicidin S biosynthesis. Its function is as follows. This protein is a multifunctional enzyme, able to activate and polymerize the amino acids Pro, Val, Orn and Leu. Activation sites for these AA consist of individual domains. This Aneurinibacillus migulanus (Bacillus migulanus) protein is Gramicidin S synthase 2 (grsB).